Reading from the N-terminus, the 92-residue chain is Evasin P942 (92 aa).

A signal peptide spans 1–26 (MEVKTFAFLQIAVLIALGLHLAPAGS). 3 cysteine pairs are disulfide-bonded: C44-C63, C48-C65, and C59-C76. N47 is a glycosylation site (N-linked (GlcNAc...) asparagine). N70 carries an N-linked (GlcNAc...) asparagine glycan.

The protein localises to the secreted. Salivary chemokine-binding protein which binds to host chemokines CXCL1, CXCL2, CXCL3, CXCL4, CXCL5, CXCL6, CXCL10, CXCL11 and CXCL13. This is Evasin P942 from Ixodes ricinus (Common tick).